The sequence spans 193 residues: Ion-translocating oxidoreductase complex subunit A (193 aa).

The next 6 membrane-spanning stretches (helical) occupy residues 5–25 (LLLF…FLGL), 39–59 (IGMG…AWMV), 62–82 (FILL…LVIA), 102–122 (LLGI…VALL), 134–154 (AVYG…FAAI), and 171–191 (SIAL…TGLV).

It belongs to the NqrDE/RnfAE family. In terms of assembly, the complex is composed of six subunits: RnfA, RnfB, RnfC, RnfD, RnfE and RnfG.

It localises to the cell inner membrane. Part of a membrane-bound complex that couples electron transfer with translocation of ions across the membrane. The protein is Ion-translocating oxidoreductase complex subunit A of Yersinia enterocolitica serotype O:8 / biotype 1B (strain NCTC 13174 / 8081).